Here is a 399-residue protein sequence, read N- to C-terminus: Elongation factor Tu (399 aa).

In terms of domain architecture, tr-type G spans 10–209 (KPHVNIGTIG…EVDAYIPTPE (200 aa)). The segment at 19–26 (GHVDHGKT) is G1. 19-26 (GHVDHGKT) contributes to the GTP binding site. Residue T26 coordinates Mg(2+). The interval 60–64 (GITIA) is G2. The G3 stretch occupies residues 81–84 (DCPG). GTP is bound by residues 81–85 (DCPGH) and 136–139 (NKQD). Residues 136–139 (NKQD) are G4. Residues 174-176 (SAL) are G5.

Belongs to the TRAFAC class translation factor GTPase superfamily. Classic translation factor GTPase family. EF-Tu/EF-1A subfamily. Monomer.

Its subcellular location is the cytoplasm. It catalyses the reaction GTP + H2O = GDP + phosphate + H(+). In terms of biological role, GTP hydrolase that promotes the GTP-dependent binding of aminoacyl-tRNA to the A-site of ribosomes during protein biosynthesis. This is Elongation factor Tu from Helicobacter pylori (strain G27).